Consider the following 389-residue polypeptide: Flagellar P-ring protein (389 aa).

The signal sequence occupies residues 1 to 33 (MRPLVAARRRAAACCALAACMLALAFAPAAARA).

This sequence belongs to the FlgI family. In terms of assembly, the basal body constitutes a major portion of the flagellar organelle and consists of four rings (L,P,S, and M) mounted on a central rod.

It is found in the periplasm. The protein localises to the bacterial flagellum basal body. Functionally, assembles around the rod to form the L-ring and probably protects the motor/basal body from shearing forces during rotation. The polypeptide is Flagellar P-ring protein (Burkholderia pseudomallei (strain K96243)).